A 121-amino-acid polypeptide reads, in one-letter code: Fluoride-specific ion channel FluC 2 (121 aa).

4 helical membrane passes run 3–23 (YLFIFLGGAVGALLRYLLSFI), 31–51 (IGTFIANLCGAFLMGFLGTLA), 64–84 (GITTGFIGSLTTFSTFQFELV), and 92–112 (FILLIVYALTSYIFGILLCFL). Gly-71 and Thr-74 together coordinate Na(+).

This sequence belongs to the fluoride channel Fluc/FEX (TC 1.A.43) family.

It localises to the cell membrane. It catalyses the reaction fluoride(in) = fluoride(out). With respect to regulation, na(+) is not transported, but it plays an essential structural role and its presence is essential for fluoride channel function. In terms of biological role, fluoride-specific ion channel. Important for reducing fluoride concentration in the cell, thus reducing its toxicity. This Staphylococcus saprophyticus subsp. saprophyticus (strain ATCC 15305 / DSM 20229 / NCIMB 8711 / NCTC 7292 / S-41) protein is Fluoride-specific ion channel FluC 2.